A 967-amino-acid polypeptide reads, in one-letter code: Leucine--tRNA ligase (967 aa).

Positions 43-53 (PYLSGHLHVGH) match the 'HIGH' region motif. The 'KMSKS' region signature appears at 650–654 (KMSKS). An ATP-binding site is contributed by lysine 653.

This sequence belongs to the class-I aminoacyl-tRNA synthetase family.

The protein resides in the cytoplasm. The catalysed reaction is tRNA(Leu) + L-leucine + ATP = L-leucyl-tRNA(Leu) + AMP + diphosphate. The sequence is that of Leucine--tRNA ligase from Pyrococcus furiosus (strain ATCC 43587 / DSM 3638 / JCM 8422 / Vc1).